The primary structure comprises 90 residues: MKKKGGRKILGFMVKEEKEENRGSVEFQVFSFTNKIRRLASHLELHKKDFSSERGLRRLLGKRRRLLAYLAKKNRVRYKKLIGQLNIREQ.

Belongs to the universal ribosomal protein uS15 family. In terms of assembly, part of the 30S ribosomal subunit.

It is found in the plastid. The protein resides in the chloroplast. The chain is Small ribosomal subunit protein uS15c (rps15-A) from Hordeum vulgare (Barley).